A 235-amino-acid polypeptide reads, in one-letter code: Ribosomal RNA small subunit methyltransferase G (235 aa).

Residues Gly-98, Met-103, 149-150 (VE), and Arg-164 each bind S-adenosyl-L-methionine.

It belongs to the methyltransferase superfamily. RNA methyltransferase RsmG family.

The protein localises to the cytoplasm. The enzyme catalyses guanosine(527) in 16S rRNA + S-adenosyl-L-methionine = N(7)-methylguanosine(527) in 16S rRNA + S-adenosyl-L-homocysteine. In terms of biological role, specifically methylates the N7 position of guanine in position 527 of 16S rRNA. The chain is Ribosomal RNA small subunit methyltransferase G from Cupriavidus pinatubonensis (strain JMP 134 / LMG 1197) (Cupriavidus necator (strain JMP 134)).